We begin with the raw amino-acid sequence, 815 residues long: Lon protease 1 (815 aa).

The Lon N-terminal domain maps to 12–205 (VFVLALRDVV…HILKTIETEI (194 aa)). 358 to 365 (GPPGVGKT) lines the ATP pocket. The Lon proteolytic domain occupies 594 to 775 (TNQIGQVAGL…DEVFKIALES (182 aa)). Active-site residues include Ser-681 and Lys-724.

Belongs to the peptidase S16 family. Homohexamer. Organized in a ring with a central cavity.

It localises to the cytoplasm. It carries out the reaction Hydrolysis of proteins in presence of ATP.. In terms of biological role, ATP-dependent serine protease that mediates the selective degradation of mutant and abnormal proteins as well as certain short-lived regulatory proteins. Required for cellular homeostasis and for survival from DNA damage and developmental changes induced by stress. Degrades polypeptides processively to yield small peptide fragments that are 5 to 10 amino acids long. Binds to DNA in a double-stranded, site-specific manner. The chain is Lon protease 1 from Hydrogenovibrio crunogenus (strain DSM 25203 / XCL-2) (Thiomicrospira crunogena).